A 315-amino-acid chain; its full sequence is MTALDWRSALTADEQRSVRALVTATTAVDGVAPVGEQVLRELGQQRTEHLLVAGSRPGGPIIGYLNLSPPRGAGGAMAELVVHPQSRRRGIGTAMARAALAKTAGRNQFWAHGTLDPARATASALGLVGVRELIQMRRPLRDIPEPTIPDGVVIRTYAGTSDDAELLRVNNAAFAGHPEQGGWTAVQLAERRGEAWFDPDGLILAFGDSPRERPGRLLGFHWTKVHPDHPGLGEVYVLGVDPAAQRRGLGQMLTSIGIVSLARRLGGRKTLDPAVEPAVLLYVESDNVAAVRTYQSLGFTTYSVDTAYALAGTDN.

N-acetyltransferase domains follow at residues 4-141 and 152-315; these read LDWR…RPLR and VVIR…GTDN. 1D-myo-inositol 2-(L-cysteinylamino)-2-deoxy-alpha-D-glucopyranoside is bound at residue Glu-36. Acetyl-CoA-binding positions include 80–82 and 88–93; these read LVV and RRGIGT. Residues Glu-179, Lys-224, and Glu-234 each coordinate 1D-myo-inositol 2-(L-cysteinylamino)-2-deoxy-alpha-D-glucopyranoside. Residues 238–240 and 245–251 contribute to the acetyl-CoA site; these read LGV and QRRGLGQ. A 1D-myo-inositol 2-(L-cysteinylamino)-2-deoxy-alpha-D-glucopyranoside-binding site is contributed by Tyr-282. Residue 287–292 coordinates acetyl-CoA; it reads NVAAVR.

It belongs to the acetyltransferase family. MshD subfamily. As to quaternary structure, monomer.

The enzyme catalyses 1D-myo-inositol 2-(L-cysteinylamino)-2-deoxy-alpha-D-glucopyranoside + acetyl-CoA = mycothiol + CoA + H(+). Its function is as follows. Catalyzes the transfer of acetyl from acetyl-CoA to desacetylmycothiol (Cys-GlcN-Ins) to form mycothiol. This chain is Mycothiol acetyltransferase, found in Mycobacterium bovis (strain ATCC BAA-935 / AF2122/97).